The following is a 231-amino-acid chain: 7-cyano-7-deazaguanine synthase (231 aa).

8 to 18 (FSGGQDSTTCL) lines the ATP pocket. Positions 188, 197, 200, and 203 each coordinate Zn(2+).

This sequence belongs to the QueC family. It depends on Zn(2+) as a cofactor.

The enzyme catalyses 7-carboxy-7-deazaguanine + NH4(+) + ATP = 7-cyano-7-deazaguanine + ADP + phosphate + H2O + H(+). Its pathway is purine metabolism; 7-cyano-7-deazaguanine biosynthesis. In terms of biological role, catalyzes the ATP-dependent conversion of 7-carboxy-7-deazaguanine (CDG) to 7-cyano-7-deazaguanine (preQ(0)). The polypeptide is 7-cyano-7-deazaguanine synthase (Salmonella choleraesuis (strain SC-B67)).